The chain runs to 97 residues: UPF0223 protein lp_2149 (97 aa).

Belongs to the UPF0223 family.

This Lactiplantibacillus plantarum (strain ATCC BAA-793 / NCIMB 8826 / WCFS1) (Lactobacillus plantarum) protein is UPF0223 protein lp_2149.